Reading from the N-terminus, the 245-residue chain is NAD(P)H-hydrate epimerase (245 aa).

Residues 16 to 224 (AAALDAELMA…HIADKYDLEV (209 aa)) form the YjeF N-terminal domain. Position 68–72 (68–72 (NNGGD)) interacts with (6S)-NADPHX. Asparagine 69 and aspartate 131 together coordinate K(+). Residues 135–141 (GFSFKPP) and aspartate 164 each bind (6S)-NADPHX. Serine 167 contributes to the K(+) binding site.

It belongs to the NnrE/AIBP family. It depends on K(+) as a cofactor.

Its subcellular location is the cytoplasm. It is found in the mitochondrion. It carries out the reaction (6R)-NADHX = (6S)-NADHX. The catalysed reaction is (6R)-NADPHX = (6S)-NADPHX. In terms of biological role, catalyzes the epimerization of the S- and R-forms of NAD(P)HX, a damaged form of NAD(P)H that is a result of enzymatic or heat-dependent hydration. This is a prerequisite for the S-specific NAD(P)H-hydrate dehydratase to allow the repair of both epimers of NAD(P)HX. The protein is NAD(P)H-hydrate epimerase of Yarrowia lipolytica (strain CLIB 122 / E 150) (Yeast).